The sequence spans 595 residues: UvrABC system protein C (595 aa).

A GIY-YIG domain is found at 17 to 94; it reads IEPGCYLMKD…IKQYQPRYNI (78 aa). Residues 199–234 form the UVR domain; sequence KTILHNLEQKMQESSESLDFERAKEYRDLIQHIHNL.

It belongs to the UvrC family. Interacts with UvrB in an incision complex.

The protein localises to the cytoplasm. In terms of biological role, the UvrABC repair system catalyzes the recognition and processing of DNA lesions. UvrC both incises the 5' and 3' sides of the lesion. The N-terminal half is responsible for the 3' incision and the C-terminal half is responsible for the 5' incision. The polypeptide is UvrABC system protein C (Staphylococcus saprophyticus subsp. saprophyticus (strain ATCC 15305 / DSM 20229 / NCIMB 8711 / NCTC 7292 / S-41)).